Here is a 356-residue protein sequence, read N- to C-terminus: 3-isopropylmalate dehydrogenase (356 aa).

4 residues coordinate substrate: Arg91, Arg101, Arg129, and Asp223. Residues Asp223, Asp247, and Asp251 each coordinate Mg(2+). Position 281 to 293 (281 to 293) interacts with NAD(+); that stretch reads GSAPDIAGKGIAN.

It belongs to the isocitrate and isopropylmalate dehydrogenases family. LeuB type 1 subfamily. In terms of assembly, homodimer. Requires Mg(2+) as cofactor. Mn(2+) is required as a cofactor.

Its subcellular location is the cytoplasm. The catalysed reaction is (2R,3S)-3-isopropylmalate + NAD(+) = 4-methyl-2-oxopentanoate + CO2 + NADH. It participates in amino-acid biosynthesis; L-leucine biosynthesis; L-leucine from 3-methyl-2-oxobutanoate: step 3/4. Functionally, catalyzes the oxidation of 3-carboxy-2-hydroxy-4-methylpentanoate (3-isopropylmalate) to 3-carboxy-4-methyl-2-oxopentanoate. The product decarboxylates to 4-methyl-2 oxopentanoate. This chain is 3-isopropylmalate dehydrogenase, found in Ralstonia nicotianae (strain ATCC BAA-1114 / GMI1000) (Ralstonia solanacearum).